A 256-amino-acid polypeptide reads, in one-letter code: Tryptophan synthase alpha chain (256 aa).

Active-site proton acceptor residues include glutamate 48 and aspartate 59.

This sequence belongs to the TrpA family. As to quaternary structure, tetramer of two alpha and two beta chains.

It carries out the reaction (1S,2R)-1-C-(indol-3-yl)glycerol 3-phosphate + L-serine = D-glyceraldehyde 3-phosphate + L-tryptophan + H2O. It functions in the pathway amino-acid biosynthesis; L-tryptophan biosynthesis; L-tryptophan from chorismate: step 5/5. In terms of biological role, the alpha subunit is responsible for the aldol cleavage of indoleglycerol phosphate to indole and glyceraldehyde 3-phosphate. This chain is Tryptophan synthase alpha chain, found in Caldicellulosiruptor bescii (strain ATCC BAA-1888 / DSM 6725 / KCTC 15123 / Z-1320) (Anaerocellum thermophilum).